Reading from the N-terminus, the 229-residue chain is tRNA (guanine-N(7)-)-methyltransferase (229 aa).

S-adenosyl-L-methionine is bound by residues Glu-62, Glu-87, Asp-114, and Asp-137. Asp-137 is a catalytic residue. A substrate-binding site is contributed by Lys-141. The interaction with RNA stretch occupies residues 143–148; sequence KHNKRR. Residues Asp-173 and 208–211 contribute to the substrate site; that span reads TKFE.

This sequence belongs to the class I-like SAM-binding methyltransferase superfamily. TrmB family.

It catalyses the reaction guanosine(46) in tRNA + S-adenosyl-L-methionine = N(7)-methylguanosine(46) in tRNA + S-adenosyl-L-homocysteine. It participates in tRNA modification; N(7)-methylguanine-tRNA biosynthesis. Its function is as follows. Catalyzes the formation of N(7)-methylguanine at position 46 (m7G46) in tRNA. The polypeptide is tRNA (guanine-N(7)-)-methyltransferase (Francisella tularensis subsp. novicida (strain U112)).